Reading from the N-terminus, the 567-residue chain is MSTQILATSFKNDNIHKIVRPTTNYHPSIWGDRFLHYDIPKEELNYKQGQVEELKEVVRKEIFGEFLCDDWSNRLKLIDVVQRLGLSYHFESEIQNELQHIYNKISINDSNFEHETLHDASIRFRLLRQHGYRVSLDIFDKFKDENGNFKECLASDTVGLLSLYEASHLSCVGENLLDEALSFTTKHLTEFLENNKKEHPNDDPLSKEISRALERPLRKTLVNLHARYFISIYEKDASHNKVLLQLAKLDFNLLQSMHKKELSEISRWWKELDSAHNFPFARNRIVELYIWILGVYYEPQYSFARNILVKIIALSSIADDIYDSYGIFEEHKLLIEAIDRWDKNCMDKLHPEYLQKYYKILLQSFEEFEQEFEKEETYKVYYGKETFKRLLRGYFEEARWLNEGYMPSLEEHLKVSLVTSGYFMLMACSLVGMKSNNIVTKQVFEWLSKDPKIVRASASVCRYMDDVAGHKNEQERNHIPSTIECYMKQYGVSEEEACDEMNRRVVIAWKEINEEFLKPTEAASPILVRALNLARVMDLLYKNGDNYTQVGKVTKDSVAVLLIDPIP.

5 residues coordinate (2E,6E)-farnesyl diphosphate: arginine 282, aspartate 319, aspartate 323, arginine 462, and aspartate 465. Mg(2+) contacts are provided by aspartate 319 and aspartate 323. A DDXXD motif motif is present at residues 319–323 (DDIYD). Positions 465 and 473 each coordinate Mg(2+).

Belongs to the terpene synthase family. Tpsb subfamily. It depends on Mg(2+) as a cofactor. Mn(2+) serves as cofactor.

It catalyses the reaction (2E,6E)-farnesyl diphosphate = alpha-humulene + diphosphate. The catalysed reaction is (2E,6E)-farnesyl diphosphate = (+)-valencene + diphosphate. The enzyme catalyses (2E)-geranyl diphosphate = beta-myrcene + diphosphate. It carries out the reaction (2E,6E)-farnesyl diphosphate = allo-aromadendrene + diphosphate. It catalyses the reaction (2E,6E)-farnesyl diphosphate + H2O = palustrol + diphosphate. It participates in secondary metabolite biosynthesis; terpenoid biosynthesis. Its function is as follows. Involved in sesquiterpene olefins biosynthesis, constituants of cannabinoids and terpenoids-rich resins. Catalyzes mainly the conversion of (2E)-farnesyl diphosphate to allo-aromadendrene, and also produces minor products such as alpha-humulene, valencene and palustrol. Can also use (2E)-geranyl diphosphate as substrate with low efficiency, producing minor amounts of myrcene. In Cannabis sativa (Hemp), this protein is Allo-aromadendrene synthase TPS4FN.